Reading from the N-terminus, the 190-residue chain is UPF0301 protein Rpic_0619 (190 aa).

This sequence belongs to the UPF0301 (AlgH) family.

The protein is UPF0301 protein Rpic_0619 of Ralstonia pickettii (strain 12J).